Here is a 644-residue protein sequence, read N- to C-terminus: ATP-dependent zinc metalloprotease FtsH (644 aa).

Residues 1–11 lie on the Stromal side of the membrane; the sequence is MNDNKNNTVRN. A helical membrane pass occupies residues 12 to 32; sequence LLIGIALLSGISLTAKKFDLI. The Lumenal segment spans residues 33–128; it reads GVQGSESGKN…FDAHPAEQKN (96 aa). A helical membrane pass occupies residues 129-149; the sequence is IFVNILSNILLPIIFITGLVY. At 150-644 the chain is on the stromal side; that stretch reads LFQNSENFGG…KNIPYVSKFN (495 aa). Position 226–233 (226–233) interacts with ATP; it reads GPPGTGKT. His-447 serves as a coordination point for Zn(2+). The active site involves Glu-448. His-451 and Asp-525 together coordinate Zn(2+).

This sequence in the central section; belongs to the AAA ATPase family. In the C-terminal section; belongs to the peptidase M41 family. As to quaternary structure, homohexamer. Zn(2+) is required as a cofactor.

The protein localises to the plastid. It is found in the chloroplast thylakoid membrane. In terms of biological role, acts as a processive, ATP-dependent zinc metallopeptidase. This chain is ATP-dependent zinc metalloprotease FtsH, found in Trieres chinensis (Marine centric diatom).